The following is a 458-amino-acid chain: Elongation factor 1-alpha (458 aa).

N,N,N-trimethylglycine is present on G2. K3 carries the N6,N6-dimethyllysine; alternate modification. K3 is subject to N6-methyllysine; alternate. A tr-type G domain is found at 5–240 (KTHVNVVVIG…DAIEPPVRPS (236 aa)). The tract at residues 14–21 (GHVDSGKS) is G1. 14-21 (GHVDSGKS) provides a ligand contact to GTP. Position 30 is an N6-methyllysine (K30). Positions 70–74 (GITID) are G2. The residue at position 79 (K79) is an N6,N6,N6-trimethyllysine. A G3 region spans residues 91–94 (DAPG). Residues 91-95 (DAPGH) and 153-156 (NKMD) contribute to the GTP site. The G4 stretch occupies residues 153–156 (NKMD). The segment at 192–194 (SGW) is G5. At K316 the chain carries N6,N6-dimethyllysine; alternate. K316 is subject to N6-methyllysine; alternate. N6-methyllysine is present on K390.

This sequence belongs to the TRAFAC class translation factor GTPase superfamily. Classic translation factor GTPase family. EF-Tu/EF-1A subfamily.

Its subcellular location is the cytoplasm. In terms of biological role, this protein promotes the GTP-dependent binding of aminoacyl-tRNA to the A-site of ribosomes during protein biosynthesis. In Mucor circinelloides f. lusitanicus (Mucor racemosus var. lusitanicus), this protein is Elongation factor 1-alpha (TEF-1).